The chain runs to 165 residues: Transcription elongation factor GreA (165 aa).

Positions Ala-55–Lys-78 form a coiled coil.

The protein belongs to the GreA/GreB family.

Functionally, necessary for efficient RNA polymerase transcription elongation past template-encoded arresting sites. The arresting sites in DNA have the property of trapping a certain fraction of elongating RNA polymerases that pass through, resulting in locked ternary complexes. Cleavage of the nascent transcript by cleavage factors such as GreA or GreB allows the resumption of elongation from the new 3'terminus. GreA releases sequences of 2 to 3 nucleotides. The polypeptide is Transcription elongation factor GreA (Streptomyces avermitilis (strain ATCC 31267 / DSM 46492 / JCM 5070 / NBRC 14893 / NCIMB 12804 / NRRL 8165 / MA-4680)).